The primary structure comprises 206 residues: N-(5'-phosphoribosyl)anthranilate isomerase (206 aa).

It belongs to the TrpF family.

It carries out the reaction N-(5-phospho-beta-D-ribosyl)anthranilate = 1-(2-carboxyphenylamino)-1-deoxy-D-ribulose 5-phosphate. It functions in the pathway amino-acid biosynthesis; L-tryptophan biosynthesis; L-tryptophan from chorismate: step 3/5. This chain is N-(5'-phosphoribosyl)anthranilate isomerase, found in Pseudomonas putida (strain ATCC 700007 / DSM 6899 / JCM 31910 / BCRC 17059 / LMG 24140 / F1).